A 170-amino-acid chain; its full sequence is Large ribosomal subunit protein uL18c (170 aa).

A chloroplast-targeting transit peptide spans 1 to 63; it reads MLASPALAGA…QADRIARHVR (63 aa).

Belongs to the universal ribosomal protein uL18 family. In terms of assembly, part of the 50S ribosomal subunit; contacts the 5S rRNA.

The protein resides in the plastid. It is found in the chloroplast. Its function is as follows. Binds 5S rRNA, forms part of the central protuberance of the 50S subunit. The protein is Large ribosomal subunit protein uL18c (RPL18) of Oryza sativa subsp. japonica (Rice).